Consider the following 539-residue polypeptide: Chaperonin GroEL (539 aa).

Residues threonine 29 to proline 32, aspartate 86 to threonine 90, glycine 413, asparagine 476 to alanine 478, and aspartate 492 each bind ATP.

The protein belongs to the chaperonin (HSP60) family. As to quaternary structure, forms a cylinder of 14 subunits composed of two heptameric rings stacked back-to-back. Interacts with the co-chaperonin GroES.

Its subcellular location is the cytoplasm. It catalyses the reaction ATP + H2O + a folded polypeptide = ADP + phosphate + an unfolded polypeptide.. Its function is as follows. Together with its co-chaperonin GroES, plays an essential role in assisting protein folding. The GroEL-GroES system forms a nano-cage that allows encapsulation of the non-native substrate proteins and provides a physical environment optimized to promote and accelerate protein folding. The sequence is that of Chaperonin GroEL from Streptococcus thermophilus (strain CNRZ 1066).